The following is a 590-amino-acid chain: Arginine--tRNA ligase (590 aa).

The 'HIGH' region signature appears at proline 131 to histidine 141.

It belongs to the class-I aminoacyl-tRNA synthetase family. Monomer.

The protein localises to the cytoplasm. The catalysed reaction is tRNA(Arg) + L-arginine + ATP = L-arginyl-tRNA(Arg) + AMP + diphosphate. The polypeptide is Arginine--tRNA ligase (Synechococcus sp. (strain RCC307)).